The following is a 573-amino-acid chain: Mitochondrial distribution and morphology protein 34 (573 aa).

Residues 1 to 195 enclose the SMP-LTD domain; the sequence is MAFNFNWSPL…LPAIIHRLSL (195 aa). Disordered stretches follow at residues 301 to 326, 349 to 433, 499 to 521, and 550 to 573; these read EGLGSGLMSPGSPALSRTHSHISSPL, FSGY…RFPN, SREKSMEAQSSHGPNPGLSITDA, and LVNNNYPGPWEQTRARTPPPAYGQ. Over residues 306–316 the composition is skewed to low complexity; that stretch reads GLMSPGSPALS. The span at 360-373 shows a compositional bias: basic residues; the sequence is RHTKARPTKKRKKR. Residues 374 to 385 are compositionally biased toward basic and acidic residues; it reads VVDLRKQSKPTD. Low complexity predominate over residues 396–409; that stretch reads TETSTASTTFSSST.

This sequence belongs to the MDM34 family. In terms of assembly, component of the ER-mitochondria encounter structure (ERMES) or MDM complex, composed of MMM1, MDM10, MDM12 and MDM34.

It localises to the mitochondrion outer membrane. Functionally, component of the ERMES/MDM complex, which serves as a molecular tether to connect the endoplasmic reticulum (ER) and mitochondria. Components of this complex are involved in the control of mitochondrial shape and protein biogenesis, and function in nonvesicular lipid trafficking between the ER and mitochondria. MDM34 is required for the interaction of the ER-resident membrane protein MMM1 and the outer mitochondrial membrane-resident beta-barrel protein MDM10. This is Mitochondrial distribution and morphology protein 34 from Uncinocarpus reesii (strain UAMH 1704).